Reading from the N-terminus, the 692-residue chain is Transforming growth factor beta activator LRRC33 (692 aa).

Positions 1-18 are cleaved as a signal peptide; the sequence is MELLPLWLCLGFHFLTVG. The Extracellular portion of the chain corresponds to 19 to 650; the sequence is WRNRSGTATA…CKWERLDLGL (632 aa). Residue Asn21 is glycosylated (N-linked (GlcNAc...) asparagine). Residues 29-56 enclose the LRRNT domain; that stretch reads ASQGVCKLVGGAADCRGQSLASVPSSLP. 10 LRR repeats span residues 58-79, 82-103, 106-127, 133-155, 158-179, 182-203, 206-227, 228-239, 251-272, and 273-294; these read HARMLTLDANPLKTLWNHSLQP, LLESLSLHSCHLERISRGAFQE, HLRSLVLGDNCLSENYEETAAA, GLRRLDLSGNALTEDMAALMLQN, SLRSVSLAGNTIMRLDDSVFEG, RLRELDLQRNYIFEIEGGAFDG, ELRHLNLAFNNLPCIVDFGLTR, LRVLNVSYNVLE, ELETLDLSHNQLLFFPLLPQYS, and KLRTLLLRDNNMGFYRDLYNTS. N-linked (GlcNAc...) asparagine glycosylation is present at Asn74. A glycan (N-linked (GlcNAc...) asparagine) is linked at Asn155. An N-linked (GlcNAc...) asparagine glycan is attached at Asn232. Asn292, Asn309, and Asn312 each carry an N-linked (GlcNAc...) asparagine glycan. LRR repeat units follow at residues 329 to 350, 353 to 374, 377 to 398, 403 to 424, 427 to 447, 463 to 484, 486 to 507, 512 to 534, 537 to 558, 559 to 580, and 585 to 594; these read DLRFLDMSQNQFQYLPDGFLRK, SLSHLNLHQNCLMTLHIREHEP, ALTELDLSHNQLSELHLAPGLA, SLRLFNLSSNQLLGVPPGLFAN, NITTLDMSHNQISLCPLPAAS, SLRSLSLEGCGLGALPDCPFQG, SLTYLDLSSNWGVLNGSLAPLQ, MLQVLSLRNMGLHSSFMALDFSG, NLRDLDLSGNCLTTFPRFGGSL, ALETLDLRRNSLTALPQKAVSE, and GLRTIYLSQN. N-linked (GlcNAc...) asparagine glycosylation is found at Asn408 and Asn427. Asn500 carries an N-linked (GlcNAc...) asparagine glycan. Residues 595-643 form the LRRCT domain; sequence PYDCCGVDGWGALQHGQTVADWAMVTCNLSSKIIRVTELPGGVPRDCKW. Asn622 is a glycosylation site (N-linked (GlcNAc...) asparagine). A helical transmembrane segment spans residues 651-671; the sequence is LYLVLILPSCLTLLVACTVIV. At 672-692 the chain is on the cytoplasmic side; the sequence is LTFKKPLLQVIKSRCHWSSVY.

The protein belongs to the LRRC32/LRRC33 family. In terms of assembly, interacts with TGFB1; associates via disulfide bonds with the Latency-associated peptide chain (LAP) regulatory chain of TGFB1, leading to regulate activation of TGF-beta-1. Interacts (via LRR repeats) with TLR2, TLR3, TLR4, TLR9 and probably other Toll-like receptors. Interacts with CYBB/NOX2; the interaction is direct. In terms of tissue distribution, mainly expressed in cells of hematopoietic origin. Highly expressed in bone marrow, thymus, liver, lung, intestine and spleen. In the brain, highly expressed in microglia.

The protein localises to the cell membrane. Its subcellular location is the endoplasmic reticulum membrane. Key regulator of transforming growth factor beta-1 (TGFB1) specifically required for microglia function in the nervous system. Required for activation of latent TGF-beta-1 in macrophages and microglia: associates specifically via disulfide bonds with the Latency-associated peptide (LAP), which is the regulatory chain of TGFB1, and regulates integrin-dependent activation of TGF-beta-1. TGF-beta-1 activation mediated by LRRC33/NRROS is highly localized: there is little spreading of TGF-beta-1 activated from one microglial cell to neighboring microglia, suggesting the existence of localized and selective activation of TGF-beta-1 by LRRC33/NRROS. Indirectly plays a role in Toll-like receptor (TLR) signaling: ability to inhibit TLR-mediated NF-kappa-B activation and cytokine production is probably a consequence of its role in TGF-beta-1 signaling. The protein is Transforming growth factor beta activator LRRC33 of Homo sapiens (Human).